The sequence spans 316 residues: tRNA dimethylallyltransferase (316 aa).

ATP is bound at residue 17–24 (GPTASGKT). Substrate is bound at residue 19–24 (TASGKT). 4 interaction with substrate tRNA regions span residues 42 to 45 (DSAL), 166 to 170 (QRLSR), 247 to 252 (RCVGYR), and 280 to 287 (KRQITWLR).

Belongs to the IPP transferase family. Monomer. Mg(2+) serves as cofactor.

It catalyses the reaction adenosine(37) in tRNA + dimethylallyl diphosphate = N(6)-dimethylallyladenosine(37) in tRNA + diphosphate. Its function is as follows. Catalyzes the transfer of a dimethylallyl group onto the adenine at position 37 in tRNAs that read codons beginning with uridine, leading to the formation of N6-(dimethylallyl)adenosine (i(6)A). The chain is tRNA dimethylallyltransferase from Shigella dysenteriae serotype 1 (strain Sd197).